We begin with the raw amino-acid sequence, 337 residues long: Follistatin (337 aa).

An N-terminal signal peptide occupies residues 1–22; sequence PGGVCLLLLLLCQFMEDRSAQA. The region spanning 23 to 96 is the TB domain; that stretch reads GNCWLRQAKN…TCENVDCGPG (74 aa). Intrachain disulfides connect C25/C48, C35/C81, C49/C84, C88/C99, C93/C109, C111/C143, C115/C136, C125/C157, C161/C172, C166/C182, C185/C218, C189/C211, C200/C232, C238/C249, C243/C260, C263/C295, C267/C288, and C277/C309. The region spanning 87–110 is the Follistatin-like 1 domain; it reads TCENVDCGPGKKCRMNKKNKPRCV. Residues 105 to 159 enclose the Kazal-like 1 domain; it reads NKPRCVCAPDCSNITWKGPVCGLDGKTYRNECALLKARCKEQPELEVQYQGKCKK. N117 is a glycosylation site (N-linked (GlcNAc...) asparagine). In terms of domain architecture, Follistatin-like 2 spans 160 to 183; that stretch reads TCRDVFCPGSSTCVVDQTNNAYCV. One can recognise a Kazal-like 2 domain in the interval 179–234; it reads NAYCVTCNRICPEPTSSEQYLCGNDGVTYPSACHLRKATCLLGRSIGLAYEGKCIK. The 25-residue stretch at 237–261 folds into the Follistatin-like 3 domain; sequence SCEDIQCTGGKKCLWDFKVGRGRCS. The 58-residue stretch at 254-311 folds into the Kazal-like 3 domain; that stretch reads KVGRGRCSLCGELCPESKSEEPVCASDNATYASECAMKEAACSSGVLLEVKHSGSCNS. N281 carries an N-linked (GlcNAc...) asparagine glycan. Positions 309–337 are disordered; sequence CNSISEDTEDEEEDEDQDYSFPISSILEW. A compositionally biased stretch (acidic residues) spans 314 to 326; it reads EDTEDEEEDEDQD.

In terms of assembly, monomer.

The protein resides in the secreted. Functionally, binds directly to activin and functions as an activin antagonist. Specific inhibitor of the biosynthesis and secretion of pituitary follicle stimulating hormone (FSH). This chain is Follistatin, found in Ovis aries (Sheep).